The primary structure comprises 87 residues: uncharacterized protein (87 aa).

This is an uncharacterized protein from Bacillus subtilis (strain 168).